We begin with the raw amino-acid sequence, 212 residues long: Cytidylate kinase (212 aa).

7 to 15 (GPAASGKGT) serves as a coordination point for ATP.

Belongs to the cytidylate kinase family. Type 1 subfamily.

The protein resides in the cytoplasm. It catalyses the reaction CMP + ATP = CDP + ADP. The enzyme catalyses dCMP + ATP = dCDP + ADP. In Bradyrhizobium diazoefficiens (strain JCM 10833 / BCRC 13528 / IAM 13628 / NBRC 14792 / USDA 110), this protein is Cytidylate kinase.